Consider the following 206-residue polypeptide: Large ribosomal subunit protein uL4 (206 aa).

Over residues Asn43–Lys52 the composition is skewed to polar residues. The tract at residues Asn43–Gly86 is disordered.

Belongs to the universal ribosomal protein uL4 family. As to quaternary structure, part of the 50S ribosomal subunit.

One of the primary rRNA binding proteins, this protein initially binds near the 5'-end of the 23S rRNA. It is important during the early stages of 50S assembly. It makes multiple contacts with different domains of the 23S rRNA in the assembled 50S subunit and ribosome. Functionally, forms part of the polypeptide exit tunnel. The sequence is that of Large ribosomal subunit protein uL4 from Lachnoclostridium phytofermentans (strain ATCC 700394 / DSM 18823 / ISDg) (Clostridium phytofermentans).